The primary structure comprises 218 residues: Probable transaldolase (218 aa).

Lys83 serves as the catalytic Schiff-base intermediate with substrate.

Belongs to the transaldolase family. Type 3B subfamily.

The protein localises to the cytoplasm. It catalyses the reaction D-sedoheptulose 7-phosphate + D-glyceraldehyde 3-phosphate = D-erythrose 4-phosphate + beta-D-fructose 6-phosphate. It functions in the pathway carbohydrate degradation; pentose phosphate pathway; D-glyceraldehyde 3-phosphate and beta-D-fructose 6-phosphate from D-ribose 5-phosphate and D-xylulose 5-phosphate (non-oxidative stage): step 2/3. Functionally, transaldolase is important for the balance of metabolites in the pentose-phosphate pathway. The polypeptide is Probable transaldolase (tal) (Mesorhizobium japonicum (strain LMG 29417 / CECT 9101 / MAFF 303099) (Mesorhizobium loti (strain MAFF 303099))).